The primary structure comprises 142 residues: MHLRLLKLHPNAIIPKYQHEGDSGVDLHAIEPVAIAPHKTALIKTGLAAEIPIGTELQIRPRSGLALKQSVTVLNSPGTIDANYRGEIGVILINHSDTVFEVKAGMRIAQMVMVPVMHLDITVVDKVSDTSRGTGGFGSTGT.

Substrate is bound by residues 62 to 64 (RSG), Asn-75, and 79 to 81 (TID).

It belongs to the dUTPase family. The cofactor is Mg(2+).

The catalysed reaction is dUTP + H2O = dUMP + diphosphate + H(+). Its pathway is pyrimidine metabolism; dUMP biosynthesis; dUMP from dCTP (dUTP route): step 2/2. Functionally, this enzyme is involved in nucleotide metabolism: it produces dUMP, the immediate precursor of thymidine nucleotides and it decreases the intracellular concentration of dUTP so that uracil cannot be incorporated into DNA. This Picosynechococcus sp. (strain ATCC 27264 / PCC 7002 / PR-6) (Agmenellum quadruplicatum) protein is Deoxyuridine 5'-triphosphate nucleotidohydrolase.